Reading from the N-terminus, the 491-residue chain is N-succinylglutamate 5-semialdehyde dehydrogenase (491 aa).

225 to 230 (GSSTVG) is an NAD(+) binding site. Residues glutamate 248 and cysteine 282 contribute to the active site.

It belongs to the aldehyde dehydrogenase family. AstD subfamily.

The catalysed reaction is N-succinyl-L-glutamate 5-semialdehyde + NAD(+) + H2O = N-succinyl-L-glutamate + NADH + 2 H(+). Its pathway is amino-acid degradation; L-arginine degradation via AST pathway; L-glutamate and succinate from L-arginine: step 4/5. In terms of biological role, catalyzes the NAD-dependent reduction of succinylglutamate semialdehyde into succinylglutamate. The polypeptide is N-succinylglutamate 5-semialdehyde dehydrogenase (Marinobacter nauticus (strain ATCC 700491 / DSM 11845 / VT8) (Marinobacter aquaeolei)).